Consider the following 984-residue polypeptide: Pre-mRNA-splicing factor cwf10 (984 aa).

Residues 1-28 form a disordered region; it reads MMEEDLYDEFGNYIGPENEEDEEELFPQ. Residues 139-402 form the tr-type G domain; it reads DDVRSFIVAG…HTLTISDEAE (264 aa). The G1 stretch occupies residues 148 to 155; it reads GHLHHGKS. 148 to 155 lines the GTP pocket; sequence GHLHHGKS. The interval 190-194 is G2; sequence VMSIK. Residues 216–219 form a G3 region; the sequence is DTPG. Residues 216-220 and 270-273 each bind GTP; these read DTPGH and NKVD. Positions 270-273 are G4; that stretch reads NKVD. Residues 371–373 are G5; that stretch reads QSL.

The protein belongs to the TRAFAC class translation factor GTPase superfamily. Classic translation factor GTPase family. EF-G/EF-2 subfamily. Belongs to the 40S cdc5-associated complex (or cwf complex), a spliceosome sub-complex reminiscent of a late-stage spliceosome composed of the U2, U5 and U6 snRNAs and at least brr2, cdc5, cwf2/prp3, cwf3/syf1, cwf4/syf3, cwf5/ecm2, spp42/cwf6, cwf7/spf27, cwf8, cwf9, cwf10, cwf11, cwf12, prp45/cwf13, cwf14, cwf15, cwf16, cwf17, cwf18, cwf19, cwf20, cwf21, cwf22, cwf23, cwf24, cwf25, cwf26, cyp7/cwf27, cwf28, cwf29/ist3, lea1, msl1, prp5/cwf1, prp10, prp12/sap130, prp17, prp22, sap61, sap62, sap114, sap145, slu7, smb1, smd1, smd3, smf1, smg1 and syf2.

Its subcellular location is the cytoplasm. It is found in the nucleus. Its function is as follows. Component of the U5 snRNP complex required for pre-mRNA splicing. Binds GTP. In Schizosaccharomyces pombe (strain 972 / ATCC 24843) (Fission yeast), this protein is Pre-mRNA-splicing factor cwf10 (cwf10).